A 326-amino-acid chain; its full sequence is Phospho-N-acetylmuramoyl-pentapeptide-transferase (326 aa).

The next 10 membrane-spanning stretches (helical) occupy residues 2–22, 51–71, 73–93, 113–133, 143–163, 175–195, 199–219, 225–245, 250–270, and 305–325; these read ILAT…FPYF, VPPM…LLWV, LTPE…LGFI, ILIQ…YSAE, GVII…IVGS, GLAA…AYIT, MNIT…LWFN, IFMG…TSVL, MLFA…IIQI, and VIVM…ITFL.

Belongs to the glycosyltransferase 4 family. MraY subfamily. Mg(2+) serves as cofactor.

The protein resides in the cell membrane. It catalyses the reaction UDP-N-acetyl-alpha-D-muramoyl-L-alanyl-gamma-D-glutamyl-meso-2,6-diaminopimeloyl-D-alanyl-D-alanine + di-trans,octa-cis-undecaprenyl phosphate = di-trans,octa-cis-undecaprenyl diphospho-N-acetyl-alpha-D-muramoyl-L-alanyl-D-glutamyl-meso-2,6-diaminopimeloyl-D-alanyl-D-alanine + UMP. Its pathway is cell wall biogenesis; peptidoglycan biosynthesis. Functionally, catalyzes the initial step of the lipid cycle reactions in the biosynthesis of the cell wall peptidoglycan: transfers peptidoglycan precursor phospho-MurNAc-pentapeptide from UDP-MurNAc-pentapeptide onto the lipid carrier undecaprenyl phosphate, yielding undecaprenyl-pyrophosphoryl-MurNAc-pentapeptide, known as lipid I. The chain is Phospho-N-acetylmuramoyl-pentapeptide-transferase from Wolbachia sp. subsp. Drosophila simulans (strain wRi).